Reading from the N-terminus, the 442-residue chain is tRNA-2-methylthio-N(6)-dimethylallyladenosine synthase (442 aa).

The MTTase N-terminal domain occupies Lys2–Thr120. The [4Fe-4S] cluster site is built by Cys11, Cys49, Cys83, Cys157, Cys161, and Cys164. Residues Arg143–Arg375 enclose the Radical SAM core domain. A TRAM domain is found at Gln378 to Glu441.

It belongs to the methylthiotransferase family. MiaB subfamily. In terms of assembly, monomer. [4Fe-4S] cluster is required as a cofactor.

Its subcellular location is the cytoplasm. The catalysed reaction is N(6)-dimethylallyladenosine(37) in tRNA + (sulfur carrier)-SH + AH2 + 2 S-adenosyl-L-methionine = 2-methylsulfanyl-N(6)-dimethylallyladenosine(37) in tRNA + (sulfur carrier)-H + 5'-deoxyadenosine + L-methionine + A + S-adenosyl-L-homocysteine + 2 H(+). Catalyzes the methylthiolation of N6-(dimethylallyl)adenosine (i(6)A), leading to the formation of 2-methylthio-N6-(dimethylallyl)adenosine (ms(2)i(6)A) at position 37 in tRNAs that read codons beginning with uridine. This Neisseria meningitidis serogroup C (strain 053442) protein is tRNA-2-methylthio-N(6)-dimethylallyladenosine synthase.